Here is a 438-residue protein sequence, read N- to C-terminus: MFKVKFADIGEGLTEGTVAEVLVKVGDVVKEGQSLYFVETDKVNSEIPAPVAGKIAVINIKAGQEIKVGDVVMEIEDGSDTSATSEPKAETKSEAKVEVVEENASVVGATPVSNDVIVRKQTTTVNKSSTIKATPLARKVAADLNIDLSLVTPTGPNQRILVADIKNHQASSTQLASQPISQPAPTPSPSAHQTIAPTIKVVEPSAPLSWDEVPMNGVRKATVKAMTKSHTEIAAFTGMKNTDITETHKMRTELKDHAAASGIKLTYLAFIIKAVAKSLRDMPNINVRGDFANNKIQFMHNINIGIAVDTPNGLMVPVIKGADHLSVFEIAIKISELANKAKDGKLTRAEMTEATFTVSNFGSVGLDYATPIINSPESAILGVGTMSQTPLYINGELQKRFIMPLSMTCDHRIIDGADAGRFLIKVQDYLSKPVLLFM.

The Lipoyl-binding domain maps to 1–76 (MFKVKFADIG…KVGDVVMEIE (76 aa)). At Lys42 the chain carries N6-lipoyllysine. The Peripheral subunit-binding (PSBD) domain maps to 132-169 (KATPLARKVAADLNIDLSLVTPTGPNQRILVADIKNHQ). Polar residues predominate over residues 172 to 181 (STQLASQPIS). The segment at 172 to 192 (STQLASQPISQPAPTPSPSAH) is disordered. His411 is an active-site residue.

The protein belongs to the 2-oxoacid dehydrogenase family. Forms a 24-polypeptide structural core with octahedral symmetry. It depends on (R)-lipoate as a cofactor.

It catalyses the reaction N(6)-[(R)-dihydrolipoyl]-L-lysyl-[protein] + acetyl-CoA = N(6)-[(R)-S(8)-acetyldihydrolipoyl]-L-lysyl-[protein] + CoA. In terms of biological role, the pyruvate dehydrogenase complex catalyzes the overall conversion of pyruvate to acetyl-CoA and CO(2). It contains multiple copies of three enzymatic components: pyruvate dehydrogenase (E1), dihydrolipoamide acetyltransferase (E2) and lipoamide dehydrogenase (E3). The protein is Dihydrolipoyllysine-residue acetyltransferase component of pyruvate dehydrogenase complex (pdhC) of Mycoplasma capricolum subsp. capricolum (strain California kid / ATCC 27343 / NCTC 10154).